A 767-amino-acid polypeptide reads, in one-letter code: MTTLNTNDKDLPIVKKYDSLNGTWDFLKTGVSQIFERLDEGMTITKYMELYTAIHNYCADASKTITVDNFNDQTANVLGEALYNNLVLYLEEYLARLRKECISQTNHEEQLAAYAKYWTRFTTSARFINHLFGYLNRYWVKLKNRFTETLVYDIYTLCLVSWHHHVFSHIRDSLLQNLLYMFTKKRLYEPTDMKYVEVCVDSITSLSFDKTDMTKPNLSSYKTFFETNFIENTKNFYAKESSEYLASHSITDYLKKAEIRLAEEEELVRLYLHESTLKPLLEATEDVLIAQHEEVLHNDFARMLDQNCSEDIIRMYRLMSRTPNGLQPLRQTFEEFVKRSGFAAVAKIVPQVGGEADVDPKEYMEMLLSTYKASKELVNTAFHGDTDFTKSLDTAFRELVNRNVVCQRSSSRSPELLAKYADSILRKSNKNVDIDDVEDCLSSIIIIFRYVEDKDVFQNFYTKLLAKRLVNGTSNSQDAESSMLSKLKEVCGFEYTSKLQRMFQDISLSQEITEAFWQLPQSRAGNIDFSALVLGTSFWPLSPNNVNFHLPEELVPLYEGFQNYYYSCHNGRKLSWLFHLSKGEIKARINPQTNVTYVFQVSTYQMGVLLLYNHRDSYTYEELAKITGLSTDFLTGILNIFLKAKVLLLGDNDKLGDPNSTYKINENFRMKKIRVQLNLPIRSEQKQESLETHKTIEEDRKLLLQSAIVRIMKARRTLKHVVLVKETIDQIKSRFTPKVSDIKQCIDMLIEKEYLERQGRDEYIYLA.

In terms of domain architecture, Cullin neddylation spans 699-760; it reads DRKLLLQSAI…EKEYLERQGR (62 aa). K713 participates in a covalent cross-link: Glycyl lysine isopeptide (Lys-Gly) (interchain with G-Cter in NEDD8).

It belongs to the cullin family. As to quaternary structure, component of multiple Cul1-RING E3 ubiquitin-protein ligase complexes commonly known as SCF (SKP1-CUL1-F-box) complexes, consisting of cul1, skp1, pip1 and a variable F-box domain-containing protein as substrate-specific subunit. Binds to the pop1 homodimer, the pop2 homodimer and the pop1/pop2 heterodimer forming the SCF(pop1-pop2) complex. Interacts with pof3, pof14 and skp1. Post-translationally, neddylated; enhancing the ubiquitin-ligase activity.

Its subcellular location is the cytoplasm. The protein operates within protein modification; protein ubiquitination. Its function is as follows. Core component of multiple cullin-RING-based SCF (SKP1-CUL1-F-box protein) E3 ubiquitin-protein ligase complexes, which mediate the ubiquitination of target proteins. The functional specificity of the SCF complex depends on the F-box protein as substrate recognition component. SCF(pop1-pop2) is required for the maintenance of ploidy and directs ubiquitination of cig2. This Schizosaccharomyces pombe (strain 972 / ATCC 24843) (Fission yeast) protein is Cullin-1 (cul1).